Here is a 164-residue protein sequence, read N- to C-terminus: Coenzyme Q-binding protein coq10, mitochondrial (164 aa).

The protein belongs to the COQ10 family. Interacts with coenzyme Q.

The protein localises to the mitochondrion inner membrane. In terms of biological role, required for the function of coenzyme Q in the respiratory chain. May serve as a chaperone or may be involved in the transport of Q6 from its site of synthesis to the catalytic sites of the respiratory complexes. The chain is Coenzyme Q-binding protein coq10, mitochondrial from Schizosaccharomyces pombe (strain 972 / ATCC 24843) (Fission yeast).